Here is a 523-residue protein sequence, read N- to C-terminus: Transcription initiation factor TFIID subunit 4 (523 aa).

Disordered regions lie at residues 1–100 (MSLP…AASD) and 185–241 (ASVE…VQGG). Over residues 58-77 (QMQPPRQPIQQQMQHFQSPS) the composition is skewed to low complexity. Positions 78–87 (PMAPQGPPGT) are enriched in pro residues. The TAFH domain occupies 101–199 (DKNVTKCVRF…VNPPPGYVFN (99 aa)). Residues 204-213 (PGPPQPPPPQ) are compositionally biased toward pro residues. Residues 214–236 (QQSQQQPPLEMRQIPNPNQIPPQ) show a composition bias toward low complexity. Residues 329 to 383 (LKPDEVLNRITKRMMSSCSVEEEALVAISDAVESHLRELITLMAGVAEHRVESLR) form a histone-fold region. Residues 333-382 (EVLNRITKRMMSSCSVEEEALVAISDAVESHLRELITLMAGVAEHRVESL) form a necessary and sufficient for interaction with oma-1 region. The disordered stretch occupies residues 407 to 435 (QEEELRESREKESLIRMSKNKNSGKETIE).

This sequence belongs to the TAF4 family. As to quaternary structure, component of the TFIID basal transcription factor complex, composed of TATA-box-binding protein tbp-1, and a number of TBP-associated factors (TAFs). Interacts (via histone-fold domain) with oma-1 (via histone-fold domain). May also interact with oma-2. Interacts (via histone-fold domain) with taf-12 (via the histone-fold domain).

Its subcellular location is the nucleus. It is found in the cytoplasm. Functionally, the TFIID basal transcription factor complex plays a major role in the initiation of RNA polymerase II (Pol II)-dependent transcription. TFIID recognizes and binds promoters via its subunit tbp-1, a TATA-box-binding protein, and promotes assembly of the pre-initiation complex (PIC). The TFIID complex consists of tbp-1 and TBP-associated factors (TAFs), including taf-4. Essential for early embryonic development, probably acting via activating transcription initiation by RNA polymerase II, as part of the TFIID complex. In early embryos, but not oocytes, remains, presumably inactive, in the cytoplasm as a result of binding to oma-1. Upon degradation of oma-1, taf-4 is released and bound by taf-12, and the taf-4/12 heterodimer translocates to the nucleus and transcriptional repression is relieved. Involved in lifespan extension in a manner dependent upon mitochondrial function. Plays a role in modulating polyribosome formation. The polypeptide is Transcription initiation factor TFIID subunit 4 (Caenorhabditis elegans).